An 81-amino-acid chain; its full sequence is Photosystem I iron-sulfur center (81 aa).

4Fe-4S ferredoxin-type domains lie at S2 to W31 and I39 to Y68. The [4Fe-4S] cluster site is built by C11, C14, C17, C21, C48, C51, C54, and C58.

In terms of assembly, the eukaryotic PSI reaction center is composed of at least 11 subunits. Requires [4Fe-4S] cluster as cofactor.

It localises to the plastid. It is found in the chloroplast thylakoid membrane. The catalysed reaction is reduced [plastocyanin] + hnu + oxidized [2Fe-2S]-[ferredoxin] = oxidized [plastocyanin] + reduced [2Fe-2S]-[ferredoxin]. Its function is as follows. Apoprotein for the two 4Fe-4S centers FA and FB of photosystem I (PSI); essential for photochemical activity. FB is the terminal electron acceptor of PSI, donating electrons to ferredoxin. The C-terminus interacts with PsaA/B/D and helps assemble the protein into the PSI complex. Required for binding of PsaD and PsaE to PSI. PSI is a plastocyanin-ferredoxin oxidoreductase, converting photonic excitation into a charge separation, which transfers an electron from the donor P700 chlorophyll pair to the spectroscopically characterized acceptors A0, A1, FX, FA and FB in turn. The chain is Photosystem I iron-sulfur center from Arabis hirsuta (Hairy rock-cress).